Consider the following 154-residue polypeptide: Small ribosomal subunit protein uS7 (154 aa).

The protein belongs to the universal ribosomal protein uS7 family. In terms of assembly, part of the 30S ribosomal subunit. Contacts proteins S9 and S11.

Functionally, one of the primary rRNA binding proteins, it binds directly to 16S rRNA where it nucleates assembly of the head domain of the 30S subunit. Is located at the subunit interface close to the decoding center, probably blocks exit of the E-site tRNA. In Karelsulcia muelleri (strain GWSS) (Sulcia muelleri), this protein is Small ribosomal subunit protein uS7.